Reading from the N-terminus, the 419-residue chain is Dynein regulatory complex protein 9 (419 aa).

2 disordered regions span residues 25–45 (TGEP…EETS) and 394–419 (NFKM…RRKK). The span at 30 to 45 (EAAEEDLDYEEEEETS) shows a compositional bias: acidic residues. In terms of domain architecture, IQ spans 372 to 401 (ELRSIVKLQAWWRGSVVRKEIGNFKMPKKD). The segment covering 394-413 (NFKMPKKDKDDSKDSKGKEK) has biased composition (basic and acidic residues).

This sequence belongs to the DRC9 family. Component of the nexin-dynein regulatory complex (N-DRC). Interacts (via IQ domain) with CALM when calcium levels are low. Does not interact with CALM in the presence of Ca(2+). Interacts with the HSP70 proteins HSPA1L and HSPA8. May form a complex with CAMK4 and HSP70. In terms of tissue distribution, expressed in the testes (at protein level). Also detected in oviduct (at protein level). Also detected in the trachea.

It localises to the cytoplasm. The protein resides in the cell projection. Its subcellular location is the cilium. It is found in the flagellum. The protein localises to the cytoskeleton. It localises to the flagellum axoneme. Its function is as follows. Component of the nexin-dynein regulatory complex (N-DRC), a key regulator of ciliary/flagellar motility which maintains the alignment and integrity of the distal axoneme and regulates microtubule sliding in motile axonemes. Binds calmodulin when cellular Ca(2+) levels are low and thereby contributes to the regulation of calcium and calmodulin-dependent protein kinase IV (CAMK4) activity; contributes to the regulation of CAMK4 signaling cascades. Required for normal axoneme assembly in sperm flagella, normal sperm tail formation and for male fertility. The protein is Dynein regulatory complex protein 9 (Iqcg) of Mus musculus (Mouse).